Reading from the N-terminus, the 1361-residue chain is DNA-directed RNA polymerase subunit beta (1361 aa).

Belongs to the RNA polymerase beta chain family. In terms of assembly, the RNAP catalytic core consists of 2 alpha, 1 beta, 1 beta' and 1 omega subunit. When a sigma factor is associated with the core the holoenzyme is formed, which can initiate transcription.

The catalysed reaction is RNA(n) + a ribonucleoside 5'-triphosphate = RNA(n+1) + diphosphate. DNA-dependent RNA polymerase catalyzes the transcription of DNA into RNA using the four ribonucleoside triphosphates as substrates. The chain is DNA-directed RNA polymerase subunit beta from Saccharophagus degradans (strain 2-40 / ATCC 43961 / DSM 17024).